The chain runs to 114 residues: Large ribosomal subunit protein bL19 (114 aa).

The protein belongs to the bacterial ribosomal protein bL19 family.

This protein is located at the 30S-50S ribosomal subunit interface and may play a role in the structure and function of the aminoacyl-tRNA binding site. The polypeptide is Large ribosomal subunit protein bL19 (Bacillus cereus (strain AH187)).